The following is a 436-amino-acid chain: NAD(P)-dependent benzaldehyde dehydrogenase (436 aa).

NADP(+) is bound by residues 117–119 (GPF), 143–147 (KPSET), 175–178 (RDEN), 193–194 (GS), 215–216 (EL), Cys249, and 337–339 (ELF). Catalysis depends on residues Glu215 and Cys249.

Belongs to the aldehyde dehydrogenase family.

The enzyme catalyses benzaldehyde + NAD(+) + H2O = benzoate + NADH + 2 H(+). It carries out the reaction benzaldehyde + NADP(+) + H2O = benzoate + NADPH + 2 H(+). It functions in the pathway aromatic compound metabolism; (R)-mandelate degradation; benzoate from (R)-mandelate: step 4/4. In terms of biological role, NAD or NADP-dependent benzaldehyde dehydrogenase that catalyzes the conversion of benzaldehyde into benzoate in the (R)-mandelate degradation pathway. The protein is NAD(P)-dependent benzaldehyde dehydrogenase (mdlD) of Pseudomonas putida (Arthrobacter siderocapsulatus).